Consider the following 386-residue polypeptide: Succinate--CoA ligase [ADP-forming] subunit beta (386 aa).

Residues 9 to 244 enclose the ATP-grasp domain; that stretch reads KEILRKYGVP…HDEEDPLETR (236 aa). ATP contacts are provided by residues Lys-46, 53 to 55, Glu-99, Cys-102, and Glu-107; that span reads GRG. Positions 199 and 213 each coordinate Mg(2+). Substrate-binding positions include Asn-264 and 321-323; that span reads GIM.

The protein belongs to the succinate/malate CoA ligase beta subunit family. As to quaternary structure, heterotetramer of two alpha and two beta subunits. Mg(2+) serves as cofactor.

The catalysed reaction is succinate + ATP + CoA = succinyl-CoA + ADP + phosphate. The enzyme catalyses GTP + succinate + CoA = succinyl-CoA + GDP + phosphate. The protein operates within carbohydrate metabolism; tricarboxylic acid cycle; succinate from succinyl-CoA (ligase route): step 1/1. In terms of biological role, succinyl-CoA synthetase functions in the citric acid cycle (TCA), coupling the hydrolysis of succinyl-CoA to the synthesis of either ATP or GTP and thus represents the only step of substrate-level phosphorylation in the TCA. The beta subunit provides nucleotide specificity of the enzyme and binds the substrate succinate, while the binding sites for coenzyme A and phosphate are found in the alpha subunit. This chain is Succinate--CoA ligase [ADP-forming] subunit beta, found in Rickettsia akari (strain Hartford).